The chain runs to 292 residues: Brix domain-containing protein ZK795.3 (292 aa).

A Brix domain is found at 78 to 259; sequence PKIVITTSRD…PYQIKLGTLE (182 aa).

The sequence is that of Brix domain-containing protein ZK795.3 from Caenorhabditis elegans.